A 1247-amino-acid polypeptide reads, in one-letter code: SAM and SH3 domain-containing protein 1 (1247 aa).

Residues 1–39 (MEDAGAAGPGPEPEPEPEPEPEPAPEPEPEPKPGAGTSE) form a disordered region. Over residues 13 to 28 (PEPEPEPEPEPAPEPE) the composition is skewed to acidic residues. Position 90 is a phosphoserine (S90). 3 disordered regions span residues 126–145 (VERK…VGKG), 221–257 (AALD…ESVK), and 316–344 (FFDG…LDTW). S248 is subject to Phosphoserine. Residues 331–343 (SLTTSPSSSSLDT) are compositionally biased toward low complexity. S407 bears the Phosphoserine mark. Residues 449–573 (SLGKKVKSVK…DFTPSPYDTD (125 aa)) are disordered. Composition is skewed to low complexity over residues 468–484 (KYSS…DGMP) and 505–523 (GGSV…SMSG). Polar residues predominate over residues 524–536 (QTVSTTDSSTSNR). One can recognise an SH3 domain in the interval 554–615 (PFCGRARVHT…KFIYVDVLSE (62 aa)). S614 bears the Phosphoserine mark. 2 disordered regions span residues 616-639 (DEEK…KSVE) and 713-810 (DSQG…LNKN). Residues 622-631 (RPTRRRRKGR) are compositionally biased toward basic residues. An SAM 1 domain is found at 633–697 (PQPKSVEDLL…LTAVELLQEY (65 aa)). The span at 746–765 (SAKSSTEPSLKSFSRNQLGN) shows a compositional bias: polar residues. Residues S821 and S839 each carry the phosphoserine modification. Disordered regions lie at residues 846–884 (EPGA…PLEQ), 903–946 (PQKL…LART), and 971–1065 (DAEQ…SELP). Positions 852 to 860 (DVPTEVTEP) are required for interaction with TRAF6. Residue T858 is modified to Phosphothreonine. Residues 1050–1060 (GSPPSTRPPPW) show a composition bias toward pro residues. One can recognise an SAM 2 domain in the interval 1177-1241 (GCISSVSDWL…LSAARLFKLP (65 aa)).

In terms of assembly, interacts with GNAS. Interacts with IQGAP1. Interacts with TRAF6 (via C-terminus); the interaction is LPS-dependent. Interacts with MAP3K7, CHUK and IKBKB. Expressed ubiquitously, with highest levels in lung, placenta, spleen and thymus. Down-regulated in the majority (74%) of breast tumors in comparison with corresponding normal breast epithelial tissues. Expressed in the epidermis, epidermal keratinocytes, dermal fibroblasts and melanocytes.

The protein resides in the cytoplasm. Its function is as follows. Is a positive regulator of NF-kappa-B signaling downstream of TLR4 activation. It acts as a scaffold molecule to assemble a molecular complex that includes TRAF6, MAP3K7, CHUK and IKBKB, thereby facilitating NF-kappa-B signaling activation. Regulates TRAF6 and MAP3K7 ubiquitination. Involved in the regulation of cell mobility. Regulates lipolysaccharide (LPS)-induced endothelial cell migration. Is involved in the regulation of skin pigmentation through the control of melanocyte migration in the epidermis. This Homo sapiens (Human) protein is SAM and SH3 domain-containing protein 1 (SASH1).